Reading from the N-terminus, the 1188-residue chain is MAGHEVRYGKHRTRRSFSRIKEVLDLPNLIEIQTDSFQDFLDSGLKEVFEDVLPISNFTDTMELEFVGYEFKEPKYTLEEARIHDASYSAPIFVTFRLVNKETGEIKTQEVFFGDFPIMTEMGTFIINGGERIIVSQLVRSPGVYFNDKVDKNGKVGYGSTVIPNRGAWLELETDSKDIAYTRIDRTRKIPFTTLVRALGFSGDDEIVDIFGESDLVRNTIEKDIHKNPSDSRTDEALKEIYERLRPGEPKTADSSRSLLIARFFDARRYDLAAVGRYKVNKKLNIKTRLLNQIIAENLVDAETGEILVEAGTEMTRSVIESIEEHLDGDLNKFVYTPNDYAVVTEPVVLQKFKVVSPIDPDRVVTIVGNANPDDKVRALTPADILAEMSYFLNLAEGLGKVDDIDHLGNRRIRAVGELLANQFRIGLARMERNVRERMSVQDNDVLTPQQIINIRPVTAAVKEFFGSSQLSQFMDQHNPLSELSHKRRLSALGPGGLTRDRAGYEVRDVHYTHYGRMCPIETPEGPNIGLINNLSSFGHLNKYGFIQTPYRKVDRATGTVTNEIVWLTADEEDEYTVAQANSKLNEDGTFAEEIVMGRHQGNNQEFSASVVDFVDVSPKQVVAVATACIPFLENDDSNRALMGANMQRQAVPLIDPKAPYVGTGMEYQAAHDSGAAVIAQQNGKVVFSDAEKVEIRRQDGSLDVYHITKFRRSNSGTAYNQRTLVKVGDIVEKGDFIADGPSMENGEMALGQNPVVAYMTWEGYNFEDAVIMSERLVKEDVYTSVHLEEFESETRDTKLGPEEITREIPNVGEEALKDLDEMGIIRIGAEVKEGDILVGKVTPKGEKDLSAEERLLHAIFGDKSREVRDTSLRVPHGGDGIVRDVKIFTRANGDELQSGVNMLVRVYIAQKRKIKVGDKMAGRHGNKGVVSRIVPVEDMPYLPDGTPVDIMLNPLGVPSRMNIGQVMELHLGMAARNLGIHIATPVFDGASSEDLWDTVREAGMDSDAKTVLYDGRTGEPFDNRVSVGVMYMIKLHHMVDDKLHARSVGPYSLVTQQPLGGKAQFGGQRFGEMEVWALEAYGASNVLQEILTYKSDDVTGRLKAYEAITKGKPIPKPGVPESFRVLVKELQSLGLDMRVLDEDDNEVELRDLDEGEDDDIMHVDDLEKAREKQAQETQEVSETTDEK.

It belongs to the RNA polymerase beta chain family. As to quaternary structure, the RNAP catalytic core consists of 2 alpha, 1 beta, 1 beta' and 1 omega subunit. When a sigma factor is associated with the core the holoenzyme is formed, which can initiate transcription.

The catalysed reaction is RNA(n) + a ribonucleoside 5'-triphosphate = RNA(n+1) + diphosphate. Functionally, DNA-dependent RNA polymerase catalyzes the transcription of DNA into RNA using the four ribonucleoside triphosphates as substrates. This is DNA-directed RNA polymerase subunit beta from Streptococcus pyogenes serotype M1.